Consider the following 97-residue polypeptide: Mapk-regulated corepressor-interacting protein 1 (97 aa).

Residues 1–29 (MTSSPVSRVVYNGKRNSSPRSPTNSSEIF) form a disordered region. Over residues 15–26 (RNSSPRSPTNSS) the composition is skewed to low complexity. Serine 21 carries the post-translational modification Phosphoserine. Position 30 is a phosphothreonine (threonine 30). Tyrosine 41 bears the Phosphotyrosine mark. Residue lysine 79 is modified to N6-acetyllysine. The PXDLS motif signature appears at 80 to 84 (PIDLS).

Belongs to the MCRIP family. As to quaternary structure, interacts (unphosphorylated form, via the PXDLS motif) with CTBP1, competitively inhibiting CTBP-ZEB1 interaction. Interacts with CTBP2. Interacts with MCRIP2. Interacts with DDX6. In terms of processing, phosphorylation by MAPK3/1 (ERK1/2) regulates MCRIP1 binding to CTBP(s). In terms of tissue distribution, widely expressed (at protein level).

Its subcellular location is the nucleus. It localises to the cytoplasm. It is found in the stress granule. Functionally, the phosphorylation status of MCRIP1 functions as a molecular switch to regulate epithelial-mesenchymal transition. Unphosphorylated MCRIP1 binds to and inhibits the transcriptional corepressor CTBP(s). When phosphorylated by MAPK/ERK, MCRIP1 releases CTBP(s) resulting in transcriptional silencing of the E-cadherin gene and induction of epithelial-mesenchymal transition. This chain is Mapk-regulated corepressor-interacting protein 1 (Mcrip1), found in Mus musculus (Mouse).